The primary structure comprises 430 residues: Agropine synthesis reductase (430 aa).

203–227 is a binding site for NAD(+); it reads LVSGSNRGVGKAIAEDLIAHGYRLS. Ser333 provides a ligand contact to substrate. The active-site Proton acceptor is Tyr346.

It belongs to the short-chain dehydrogenases/reductases (SDR) family.

The protein operates within opine metabolism; mannopine biosynthesis. In terms of biological role, reduces deoxy-fructosyl-glutamine to mannopine. This chain is Agropine synthesis reductase (mas1), found in Rhizobium rhizogenes (Agrobacterium rhizogenes).